Consider the following 80-residue polypeptide: Translation initiation factor IF-1 (80 aa).

Residues Arg-6–Leu-80 form the S1-like domain.

This sequence belongs to the IF-1 family. As to quaternary structure, component of the 30S ribosomal translation pre-initiation complex which assembles on the 30S ribosome in the order IF-2 and IF-3, IF-1 and N-formylmethionyl-tRNA(fMet); mRNA recruitment can occur at any time during PIC assembly.

It is found in the cytoplasm. Functionally, one of the essential components for the initiation of protein synthesis. Stabilizes the binding of IF-2 and IF-3 on the 30S subunit to which N-formylmethionyl-tRNA(fMet) subsequently binds. Helps modulate mRNA selection, yielding the 30S pre-initiation complex (PIC). Upon addition of the 50S ribosomal subunit IF-1, IF-2 and IF-3 are released leaving the mature 70S translation initiation complex. This Aquifex aeolicus (strain VF5) protein is Translation initiation factor IF-1.